We begin with the raw amino-acid sequence, 488 residues long: UDP-glycosyltransferase 73B1 (488 aa).

Residues T297, 356-358 (APQ), 373-381 (HCGWNSLLE), and 395-398 (GAEQ) each bind UDP-alpha-D-glucose.

The protein belongs to the UDP-glycosyltransferase family.

Possesses low quercetin 3-O-glucosyltransferase and 7-O-glucosyltransferase activities in vitro. The polypeptide is UDP-glycosyltransferase 73B1 (UGT73B1) (Arabidopsis thaliana (Mouse-ear cress)).